We begin with the raw amino-acid sequence, 65 residues long: Small ribosomal subunit protein eS27 (65 aa).

Zn(2+) is bound by residues Cys-20, Cys-23, Cys-39, and Cys-42. The C4-type zinc-finger motif lies at 20–42; sequence CIDCGNEQIVFSHPATRVRCLVC.

Belongs to the eukaryotic ribosomal protein eS27 family. In terms of assembly, part of the 30S ribosomal subunit. It depends on Zn(2+) as a cofactor.

The protein is Small ribosomal subunit protein eS27 of Pyrococcus horikoshii (strain ATCC 700860 / DSM 12428 / JCM 9974 / NBRC 100139 / OT-3).